Consider the following 900-residue polypeptide: Alanine--tRNA ligase (900 aa).

Zn(2+) is bound by residues histidine 587, histidine 591, cysteine 691, and histidine 695.

The protein belongs to the class-II aminoacyl-tRNA synthetase family. Requires Zn(2+) as cofactor.

It localises to the cytoplasm. It carries out the reaction tRNA(Ala) + L-alanine + ATP = L-alanyl-tRNA(Ala) + AMP + diphosphate. Catalyzes the attachment of alanine to tRNA(Ala) in a two-step reaction: alanine is first activated by ATP to form Ala-AMP and then transferred to the acceptor end of tRNA(Ala). Also edits incorrectly charged Ser-tRNA(Ala) and Gly-tRNA(Ala) via its editing domain. The polypeptide is Alanine--tRNA ligase (Aeropyrum pernix (strain ATCC 700893 / DSM 11879 / JCM 9820 / NBRC 100138 / K1)).